We begin with the raw amino-acid sequence, 442 residues long: tRNA modification GTPase MnmE (442 aa).

Residues Arg-27, Glu-84, and Lys-124 each contribute to the (6S)-5-formyl-5,6,7,8-tetrahydrofolate site. Positions 221-366 (GLHVVIVGAP…LLDALQAFAE (146 aa)) constitute a TrmE-type G domain. GTP-binding positions include 231–236 (NAGKSS), 250–256 (SKEAGTT), and 275–278 (DTAG). 2 residues coordinate Mg(2+): Ser-235 and Thr-256. Lys-442 serves as a coordination point for (6S)-5-formyl-5,6,7,8-tetrahydrofolate.

The protein belongs to the TRAFAC class TrmE-Era-EngA-EngB-Septin-like GTPase superfamily. TrmE GTPase family. Homodimer. Heterotetramer of two MnmE and two MnmG subunits. K(+) serves as cofactor.

It is found in the cytoplasm. Exhibits a very high intrinsic GTPase hydrolysis rate. Involved in the addition of a carboxymethylaminomethyl (cmnm) group at the wobble position (U34) of certain tRNAs, forming tRNA-cmnm(5)s(2)U34. The sequence is that of tRNA modification GTPase MnmE from Brucella canis (strain ATCC 23365 / NCTC 10854 / RM-666).